Reading from the N-terminus, the 233-residue chain is Uracil-DNA glycosylase (233 aa).

The active-site Proton acceptor is the Asp70.

It belongs to the uracil-DNA glycosylase (UDG) superfamily. UNG family.

The protein localises to the cytoplasm. The catalysed reaction is Hydrolyzes single-stranded DNA or mismatched double-stranded DNA and polynucleotides, releasing free uracil.. In terms of biological role, excises uracil residues from the DNA which can arise as a result of misincorporation of dUMP residues by DNA polymerase or due to deamination of cytosine. In Helicobacter acinonychis (strain Sheeba), this protein is Uracil-DNA glycosylase.